A 489-amino-acid polypeptide reads, in one-letter code: Type II restriction enzyme Sau3AI (489 aa).

Requires Mg(2+) as cofactor.

The enzyme catalyses Endonucleolytic cleavage of DNA to give specific double-stranded fragments with terminal 5'-phosphates.. Functionally, an E and P subtype restriction enzyme that recognizes the double-stranded sequence 5'-GATC-3' and cleaves before G-1. The polypeptide is Type II restriction enzyme Sau3AI (sau3AIR) (Staphylococcus aureus).